The sequence spans 67 residues: Peptide Hp1036 (67 aa).

An N-terminal signal peptide occupies residues 1–23 (MKTQFAILLITLVLFQMFSQSDA). Phenylalanine 36 is subject to Phenylalanine amide. Positions 40 to 67 (GLNDLSDLDELFDGEISEADVDFLREIM) are excised as a propeptide.

Belongs to the non-disulfide-bridged peptide (NDBP) superfamily. Short antimicrobial peptide (group 4) family. As to expression, expressed by the venom gland.

The protein resides in the secreted. The protein localises to the target cell membrane. Functionally, amphipathic peptide with antibacterial activities. Shows antiviral activities against the herpes simplex virus type-1. It potently inhibits the initial infection by provoking the rupture of viral envelop and the dissociation of proteins from the virions (EC(50) is 0.43 uM). It also effectively inhibits viral attachment (EC(50) is 2.87 uM), viral entry (EC(50) is 4.29 uM) and viral proliferation after infection (EC(50) is 7.86). Morever, it enters mammalian tested cells (Vero) and reduces the intracellular infectivity. The polypeptide is Peptide Hp1036 (Heterometrus petersii (Asian forest scorpion)).